A 264-amino-acid chain; its full sequence is S-adenosylmethionine decarboxylase proenzyme (264 aa).

The Schiff-base intermediate with substrate; via pyruvic acid role is filled by Ser113. Ser113 bears the Pyruvic acid (Ser); by autocatalysis mark. His118 functions as the Proton acceptor; for processing activity in the catalytic mechanism. Cys141 acts as the Proton donor; for catalytic activity in catalysis.

Belongs to the prokaryotic AdoMetDC family. Type 2 subfamily. Heterooctamer of four alpha and four beta chains arranged as a tetramer of alpha/beta heterodimers. Requires pyruvate as cofactor. Post-translationally, is synthesized initially as an inactive proenzyme. Formation of the active enzyme involves a self-maturation process in which the active site pyruvoyl group is generated from an internal serine residue via an autocatalytic post-translational modification. Two non-identical subunits are generated from the proenzyme in this reaction, and the pyruvate is formed at the N-terminus of the alpha chain, which is derived from the carboxyl end of the proenzyme. The post-translation cleavage follows an unusual pathway, termed non-hydrolytic serinolysis, in which the side chain hydroxyl group of the serine supplies its oxygen atom to form the C-terminus of the beta chain, while the remainder of the serine residue undergoes an oxidative deamination to produce ammonia and the pyruvoyl group blocking the N-terminus of the alpha chain.

The enzyme catalyses S-adenosyl-L-methionine + H(+) = S-adenosyl 3-(methylsulfanyl)propylamine + CO2. Its pathway is amine and polyamine biosynthesis; S-adenosylmethioninamine biosynthesis; S-adenosylmethioninamine from S-adenosyl-L-methionine: step 1/1. In terms of biological role, catalyzes the decarboxylation of S-adenosylmethionine to S-adenosylmethioninamine (dcAdoMet), the propylamine donor required for the synthesis of the polyamines spermine and spermidine from the diamine putrescine. This chain is S-adenosylmethionine decarboxylase proenzyme, found in Xylella fastidiosa (strain 9a5c).